The primary structure comprises 287 residues: Ret finger protein-like 4A-like protein 1 (287 aa).

The RING-type; degenerate zinc finger occupies 11–53; that stretch reads CPVCLKDLEEAVQLKCGYACCLQCLNSLQKEPDGEGLLCRFCS. Residues 78–276 enclose the B30.2/SPRY domain; sequence EPKLKSVLTM…LSICSVINPS (199 aa).

This Homo sapiens (Human) protein is Ret finger protein-like 4A-like protein 1 (RFPL4AL1).